Reading from the N-terminus, the 176-residue chain is Peptide deformylase 1 (176 aa).

2 residues coordinate Fe cation: C99 and H141. The active site involves E142. H145 contributes to the Fe cation binding site.

This sequence belongs to the polypeptide deformylase family. It depends on Fe(2+) as a cofactor.

The enzyme catalyses N-terminal N-formyl-L-methionyl-[peptide] + H2O = N-terminal L-methionyl-[peptide] + formate. Its function is as follows. Removes the formyl group from the N-terminal Met of newly synthesized proteins. Requires at least a dipeptide for an efficient rate of reaction. N-terminal L-methionine is a prerequisite for activity but the enzyme has broad specificity at other positions. The protein is Peptide deformylase 1 of Bordetella pertussis (strain Tohama I / ATCC BAA-589 / NCTC 13251).